The following is a 658-amino-acid chain: Probable rhamnogalacturonate lyase B (658 aa).

A signal peptide spans 1 to 19 (MRFAIPLGAACAWAGVALA). 10 N-linked (GlcNAc...) asparagine glycosylation sites follow: Asn-110, Asn-143, Asn-239, Asn-280, Asn-522, Asn-530, Asn-564, Asn-571, Asn-592, and Asn-633.

The protein belongs to the polysaccharide lyase 4 family.

It localises to the secreted. It carries out the reaction Endotype eliminative cleavage of L-alpha-rhamnopyranosyl-(1-&gt;4)-alpha-D-galactopyranosyluronic acid bonds of rhamnogalacturonan I domains in ramified hairy regions of pectin leaving L-rhamnopyranose at the reducing end and 4-deoxy-4,5-unsaturated D-galactopyranosyluronic acid at the non-reducing end.. Functionally, pectinolytic enzymes consist of four classes of enzymes: pectin lyase, polygalacturonase, pectin methylesterase and rhamnogalacturonase. Degrades the rhamnogalacturonan I (RG-I) backbone of pectin. The sequence is that of Probable rhamnogalacturonate lyase B (rglB) from Neosartorya fischeri (strain ATCC 1020 / DSM 3700 / CBS 544.65 / FGSC A1164 / JCM 1740 / NRRL 181 / WB 181) (Aspergillus fischerianus).